The chain runs to 464 residues: Asparagine--tRNA ligase (464 aa).

Belongs to the class-II aminoacyl-tRNA synthetase family. Homodimer.

The protein resides in the cytoplasm. It carries out the reaction tRNA(Asn) + L-asparagine + ATP = L-asparaginyl-tRNA(Asn) + AMP + diphosphate + H(+). The polypeptide is Asparagine--tRNA ligase (Azobacteroides pseudotrichonymphae genomovar. CFP2).